The primary structure comprises 201 residues: FMN-dependent NADH:quinone oxidoreductase (201 aa).

Residues Ser-10, 16 to 18 (SQS), 96 to 99 (MYNF), and 140 to 143 (SRGG) contribute to the FMN site.

It belongs to the azoreductase type 1 family. As to quaternary structure, homodimer. Requires FMN as cofactor.

The catalysed reaction is 2 a quinone + NADH + H(+) = 2 a 1,4-benzosemiquinone + NAD(+). It catalyses the reaction N,N-dimethyl-1,4-phenylenediamine + anthranilate + 2 NAD(+) = 2-(4-dimethylaminophenyl)diazenylbenzoate + 2 NADH + 2 H(+). Its function is as follows. Quinone reductase that provides resistance to thiol-specific stress caused by electrophilic quinones. Also exhibits azoreductase activity. Catalyzes the reductive cleavage of the azo bond in aromatic azo compounds to the corresponding amines. The sequence is that of FMN-dependent NADH:quinone oxidoreductase from Salmonella paratyphi A (strain ATCC 9150 / SARB42).